The primary structure comprises 1454 residues: Receptor-type tyrosine-protein phosphatase T (1454 aa).

The N-terminal stretch at 1-29 (MGSLGGLALCLLRLLLLGLQRPPLPGAGA) is a signal peptide. At 30-770 (QSAAGGCSFD…EKQVDNTVKM (741 aa)) the chain is on the extracellular side. An MAM domain is found at 34–195 (GGCSFDEHYS…VRVLAHPCRK (162 aa)). Residues Asn-82, Asn-102, Asn-141, and Asn-212 are each glycosylated (N-linked (GlcNAc...) asparagine). The 92-residue stretch at 197–288 (PHFLRLQNVE…SGVSNYAELI (92 aa)) folds into the Ig-like C2-type domain. Cys-217 and Cys-271 are joined by a disulfide. 3 Fibronectin type-III domains span residues 295–388 (PIAP…TKCA), 393–487 (GPQN…TEED), and 488–594 (VPGA…SAPS). N-linked (GlcNAc...) asparagine glycosylation is found at Asn-425, Asn-514, Asn-551, Asn-605, Asn-658, and Asn-688. The region spanning 670–767 (AELKPSNLPV…VEPEKQVDNT (98 aa)) is the Fibronectin type-III 4 domain. A helical membrane pass occupies residues 771–791 (AGVIAGLLMFIIILLGVMLTI). The Cytoplasmic portion of the chain corresponds to 792-1454 (KRRKLAKKQK…EVALEYLSSF (663 aa)). A disordered region spans residues 800 to 852 (QKETQSGAQREMGPVASTDKPTAKLGTNRNDEGFSSSSQDVNGFTDGSRGELS). The span at 824–841 (LGTNRNDEGFSSSSQDVN) shows a compositional bias: polar residues. 2 consecutive Tyrosine-protein phosphatase domains span residues 902 to 1156 (FKEE…ILEA) and 1188 to 1450 (IKDE…ALEY). Substrate contacts are provided by residues Asp-1065, 1097 to 1103 (CSAGAGR), and Gln-1141. Catalysis depends on Cys-1097, which acts as the Phosphocysteine intermediate. The residue at position 1221 (Ser-1221) is a Phosphoserine. Cys-1391 serves as the catalytic Phosphocysteine intermediate.

The protein belongs to the protein-tyrosine phosphatase family. Receptor class 2B subfamily. In terms of tissue distribution, expression is restricted to the CNS. Distributed throughout the brain and spinal cord.

Its subcellular location is the membrane. The catalysed reaction is O-phospho-L-tyrosyl-[protein] + H2O = L-tyrosyl-[protein] + phosphate. Its function is as follows. May be involved in both signal transduction and cellular adhesion in the CNS. May have specific signaling roles in the tyrosine phosphorylation/dephosphorylation pathway in the anterior compartment of the adult cerebellar cortex. In Mus musculus (Mouse), this protein is Receptor-type tyrosine-protein phosphatase T (Ptprt).